Reading from the N-terminus, the 345-residue chain is WD40 repeat protein poxJ (345 aa).

4 WD repeats span residues 15 to 49 (ANPPSDSISELSWSPVANHLAMSSWDQTVRIYDVS), 59 to 100 (LFNF…EAQQ), 101 to 146 (VAAH…PLAT), and 250 to 284 (VNDVSFHPKYYTFSTAGADGTFAFWDKDAHHRLKS).

The protein belongs to the WD repeat rae1 family.

The protein operates within secondary metabolite biosynthesis. WD40 repeat protein; part of the gene cluster that mediates the biosynthesis of oxaleimides, cytotoxic compounds containing an unusual disubstituted succinimide moiety. The first step of the pathway is provided by the HR-PKS poxF that serves in a new mode of collaborative biosynthesis with the PKS-NRPS poxE, by providing the olefin containing amino acid substrate via the synthesis of an ACP-bound dec-4-enoate. The cytochrome P450 monooxygenase poxM-catalyzed oxidation at the alpha-position creates the enzyme-bound 2-hydroxydec-4-enoyl-ACP thioester, which may be prone to spontaneous hydrolysis to yield 2-hydroxydec-4-enoic acid due to increased electrophilicity of the carbonyl. 2-hydroxydec-4-enoic acid can then be further oxidized by poxM to yield the alpha-ketoacid 2-oxodec-4-enoicacid, which is reductively aminated by the aminotransferase poxL to yield (S,E)-2-aminodec-4-enoic acid. The Hybrid PKS-NRPS synthetase poxE then performs condensation between the octaketide product of its PKS modules and the amino group of (S,E)-2-aminodec-4-enoic acid which is activated and incorporated by the adenylation domain. The resulting aminoacyl product can be cyclized by the Diels-Alderase PoxQ and reductively released by the reductive (R) domain of poxE to yield an aldehyde intermediate. The released aldehyde is then substrate for a Knoevenagel condensation by the hydrolyase poxO followed by an oxidation at the 5-position of the pyrrolidone ring. The presence of the olefin from the amino acid building block allows for migration of the substituted allyl group to occur. This allylic transposition reaction takes place in a conjugate addition, semipinacol-like fashion to yield a succinimide intermediate. Iterative two-electron oxidations of the C7 methyl of the succinimide intermediate to the carboxylic acid can be catalyzed by one of two remaining cytochrome P450 monooxygenasess poxC or poxD to yield oxaleimide A. Subsequent oxidation yields the maleimide scaffold oxaleimide I. Both oxaleimide A and oxaleimide I can undergo oxidative modifications in the decalin ring to yield the series of products oxaleimides B to H. The protein is WD40 repeat protein poxJ of Penicillium oxalicum (strain 114-2 / CGMCC 5302) (Penicillium decumbens).